The primary structure comprises 230 residues: MIQRRETFLNNVAEKLGRGRRTAGVKRPDYTVKPQFEVMKEHSSDQLVNVLSEQCTKIHTDVKQTKVDRLEQAIDNVLEEYSARNVITWNDPRFDQFGLTSFLQREQVEVWDHTEGERLVEKAEQADIGITFADYTLAESGTVVLLSGNGKGRSVSLLPTYYIAIIPKSTLVPRMSQVTRELHLKAASGERLPSCINFISGPSNSADIEMNLVVGVHGPIRACYIVVEDR.

Belongs to the LutC/YkgG family.

In terms of biological role, is involved in L-lactate degradation and allows cells to grow with lactate as the sole carbon source. This chain is Lactate utilization protein C, found in Halalkalibacterium halodurans (strain ATCC BAA-125 / DSM 18197 / FERM 7344 / JCM 9153 / C-125) (Bacillus halodurans).